A 146-amino-acid polypeptide reads, in one-letter code: Large ribosomal subunit protein uL15 (146 aa).

Residues 1–18 (MKLHELKPSEGSRKERNR) show a composition bias toward basic and acidic residues. The tract at residues 1–50 (MKLHELKPSEGSRKERNRVGRGTGSGNGKTSGRGHKGQKARSGGGVRLGF) is disordered. The span at 21–31 (RGTGSGNGKTS) shows a compositional bias: gly residues.

This sequence belongs to the universal ribosomal protein uL15 family. As to quaternary structure, part of the 50S ribosomal subunit.

Binds to the 23S rRNA. The chain is Large ribosomal subunit protein uL15 from Listeria monocytogenes serotype 4b (strain CLIP80459).